Reading from the N-terminus, the 155-residue chain is Small ribosomal subunit protein uS7 (155 aa).

Belongs to the universal ribosomal protein uS7 family. Part of the 30S ribosomal subunit. Contacts proteins S9 and S11.

Functionally, one of the primary rRNA binding proteins, it binds directly to 16S rRNA where it nucleates assembly of the head domain of the 30S subunit. Is located at the subunit interface close to the decoding center, probably blocks exit of the E-site tRNA. In Malacoplasma penetrans (strain HF-2) (Mycoplasma penetrans), this protein is Small ribosomal subunit protein uS7.